Here is a 678-residue protein sequence, read N- to C-terminus: DNA ligase (678 aa).

NAD(+)-binding positions include 47–51, 96–97, and glutamate 122; these read DSDYD and SL. Lysine 124 acts as the N6-AMP-lysine intermediate in catalysis. NAD(+)-binding residues include arginine 145, glutamate 182, lysine 300, and lysine 324. Residues cysteine 418, cysteine 421, cysteine 436, and cysteine 442 each contribute to the Zn(2+) site. In terms of domain architecture, BRCT spans 602–678; the sequence is AYNESFTGKT…ILEDNLKDLL (77 aa).

This sequence belongs to the NAD-dependent DNA ligase family. LigA subfamily. Mg(2+) is required as a cofactor. Requires Mn(2+) as cofactor.

It catalyses the reaction NAD(+) + (deoxyribonucleotide)n-3'-hydroxyl + 5'-phospho-(deoxyribonucleotide)m = (deoxyribonucleotide)n+m + AMP + beta-nicotinamide D-nucleotide.. Its function is as follows. DNA ligase that catalyzes the formation of phosphodiester linkages between 5'-phosphoryl and 3'-hydroxyl groups in double-stranded DNA using NAD as a coenzyme and as the energy source for the reaction. It is essential for DNA replication and repair of damaged DNA. In Francisella tularensis subsp. novicida (strain U112), this protein is DNA ligase.